The sequence spans 214 residues: NAD(P)H-quinone oxidoreductase subunit 5, chloroplastic (214 aa).

2 consecutive transmembrane segments (helical) span residues 84 to 104 (LFPLLILLLFTFFIGFIGIPF) and 152 to 172 (SLAILGLFIAYIFYGSAYSFF).

It belongs to the complex I subunit 5 family. NDH is composed of at least 16 different subunits, 5 of which are encoded in the nucleus.

The protein localises to the plastid. Its subcellular location is the chloroplast thylakoid membrane. It carries out the reaction a plastoquinone + NADH + (n+1) H(+)(in) = a plastoquinol + NAD(+) + n H(+)(out). It catalyses the reaction a plastoquinone + NADPH + (n+1) H(+)(in) = a plastoquinol + NADP(+) + n H(+)(out). NDH shuttles electrons from NAD(P)H:plastoquinone, via FMN and iron-sulfur (Fe-S) centers, to quinones in the photosynthetic chain and possibly in a chloroplast respiratory chain. The immediate electron acceptor for the enzyme in this species is believed to be plastoquinone. Couples the redox reaction to proton translocation, and thus conserves the redox energy in a proton gradient. The sequence is that of NAD(P)H-quinone oxidoreductase subunit 5, chloroplastic (ndhF) from Brachypodium sylvaticum (False brome).